We begin with the raw amino-acid sequence, 106 residues long: Putative membrane protein insertion efficiency factor (106 aa).

Belongs to the UPF0161 family.

Its subcellular location is the cell inner membrane. Its function is as follows. Could be involved in insertion of integral membrane proteins into the membrane. The protein is Putative membrane protein insertion efficiency factor of Methylacidiphilum infernorum (isolate V4) (Methylokorus infernorum (strain V4)).